The chain runs to 816 residues: Protein kinase C-binding protein NELL2 (816 aa).

A signal peptide spans 1-21; it reads MESRVLLRTFCLIFGLGAVWG. N53, N225, N293, and N298 each carry an N-linked (GlcNAc...) asparagine glycan. The Laminin G-like domain occupies 64–228; the sequence is PRSVKASTAT…AQCPDLNRTC (165 aa). The VWFC 1 domain occupies 272–331; it reads RTCTMKGTTYREFESWIDGCKNCTCLNGTIQCETLICPNPDCPLNSALAYVDGKCCKECK. The EGF-like 1 domain occupies 397–439; it reads GYDFCSERHNCMENSVCRNLNDRAVCSCRDGFRALREDNAYCE. Intrachain disulfides connect C401/C413, C407/C422, and C424/C438. Residues D440, I441, and E443 each coordinate Ca(2+). Residues 440–481 form the EGF-like 2; calcium-binding domain; the sequence is DIDECAEGRHYCRENTMCVNTPGSFMCICKTGYIRIDDYSCT. 9 disulfides stabilise this stretch: C444–C457, C451–C466, C468–C480, C486–C499, C493–C508, C510–C521, C525–C535, C529–C541, and C543–C552. Ca(2+) is bound by residues N459, T460, and S463. In terms of domain architecture, EGF-like 3; calcium-binding spans 482 to 522; sequence EHDECITNQHNCDENALCFNTVGGHNCVCKPGYTGNGTTCK. Residue N517 is glycosylated (N-linked (GlcNAc...) asparagine). Residues 523 to 553 enclose the EGF-like 4 domain; that stretch reads AFCKDGCRNGGACIAANVCACPQGFTGPSCE. T548 carries an O-linked (GlcNAc...) threonine glycan. The Ca(2+) site is built by D555, I556, and E558. Positions 555-601 constitute an EGF-like 5; calcium-binding domain; it reads DIDECSDGFVQCDSRANCINLPGWYHCECRDGYHDNGMFSPSGESCE. Disulfide bonds link C559–C572, C566–C581, and C583–C600. The Ca(2+) site is built by N574, L575, and W578. Positions 602, 603, and 605 each coordinate Ca(2+). An EGF-like 6; calcium-binding domain is found at 602-637; that stretch reads DIDECGTGRHSCANDTICFNLDGGYDCRCPHGKNCT. 3 cysteine pairs are disulfide-bonded: C606/C619, C613/C628, and C630/C636. N-linked (GlcNAc...) asparagine glycosylation is present at N615. 3 residues coordinate Ca(2+): N621, L622, and G625. N-linked (GlcNAc...) asparagine glycosylation occurs at N635. 2 consecutive VWFC domains span residues 638–693 and 698–756; these read GDCI…PECD and SQCL…PRCV.

Homotrimer. Binds to PRKCB. Interacts with NICOL1; this interaction triggers epididymal differentiation.

It is found in the secreted. In terms of biological role, plays multiple roles in neural tissues, regulates neuronal proliferation, survival, differentiation, polarization, as well as axon guidance and synaptic functions. Plays an important role in axon development during neuronal differentiation through the MAPK intracellular signaling pathway. Via binding to its receptor ROBO3, plays a role in axon guidance, functions as a repulsive guidance cue for commissural axons, helping to steer them across the spinal cord midline. Required for neuron survival through the modulation of MAPK signaling pathways too. Involved in the regulation of hypothalamic GNRH secretion and the control of puberty. Functionally, testicular luminal protein that signals through a ROS1-pathway to regulate the epididymal initial segment (IS) maturation, sperm maturation and male fertility. The chain is Protein kinase C-binding protein NELL2 (NELL2) from Pongo abelii (Sumatran orangutan).